The primary structure comprises 347 residues: Haptoglobin (347 aa).

Positions 1 to 18 are cleaved as a signal peptide; it reads MSDLGAVVALLLWGQLFA. Positions 31 to 88 constitute a Sushi domain; it reads DGCPKPPMIANGYVEHLVRYQCKNYYRLRTEGDGVYTLNNEKQWTNKAVGDKLPECEA. Intrachain disulfides connect cysteine 52-cysteine 86 and cysteine 90-cysteine 207. Residues 103–347 form a serine protease region; the sequence is ILGGHLDAKG…DWVQKTIAEN (245 aa). Residues asparagine 125, asparagine 148, asparagine 152, asparagine 182, and asparagine 232 are each glycosylated (N-linked (GlcNAc...) asparagine). Cystine bridges form between cysteine 250/cysteine 281 and cysteine 292/cysteine 322. The interval 259–264 is interaction with CD163; that stretch reads VPEKKT.

Belongs to the peptidase S1 family. As to quaternary structure, tetramer of two alpha and two beta chains; disulfide-linked. The hemoglobin/haptoglobin complex is composed of a haptoglobin dimer bound to two hemoglobin alpha-beta dimers. Interacts with CD163. Interacts with ERGIC3. In terms of tissue distribution, expressed by the liver and secreted in plasma.

The protein resides in the secreted. Its function is as follows. As a result of hemolysis, hemoglobin is found to accumulate in the kidney and is secreted in the urine. Haptoglobin captures, and combines with free plasma hemoglobin to allow hepatic recycling of heme iron and to prevent kidney damage. Haptoglobin also acts as an antioxidant, has antibacterial activity and plays a role in modulating many aspects of the acute phase response. Hemoglobin/haptoglobin complexes are rapidly cleared by the macrophage CD163 scavenger receptor expressed on the surface of liver Kupfer cells through an endocytic lysosomal degradation pathway. This chain is Haptoglobin (HP), found in Papio hamadryas (Hamadryas baboon).